The primary structure comprises 449 residues: Histidinol dehydrogenase (449 aa).

Residues Tyr136, Gln204, and Asn232 each contribute to the NAD(+) site. Positions 255, 277, and 280 each coordinate substrate. Gln277 and His280 together coordinate Zn(2+). Catalysis depends on proton acceptor residues Glu346 and His347. Positions 347, 380, 434, and 439 each coordinate substrate. A Zn(2+)-binding site is contributed by Asp380. His439 provides a ligand contact to Zn(2+).

Belongs to the histidinol dehydrogenase family. Requires Zn(2+) as cofactor.

The catalysed reaction is L-histidinol + 2 NAD(+) + H2O = L-histidine + 2 NADH + 3 H(+). It functions in the pathway amino-acid biosynthesis; L-histidine biosynthesis; L-histidine from 5-phospho-alpha-D-ribose 1-diphosphate: step 9/9. Its function is as follows. Catalyzes the sequential NAD-dependent oxidations of L-histidinol to L-histidinaldehyde and then to L-histidine. The polypeptide is Histidinol dehydrogenase (hisD) (Mycobacterium leprae (strain TN)).